The primary structure comprises 258 residues: MATIHPTALVAPGARLADDVEIGPYSVIGEHVEIGAGTTVGAHAVLTGHTTIGERNKIFHFVSLGEAPQDKKYAGEPTRLEIGDYNVIREFCTFNIGTVQDRGVTRIGHHNWIMAYVHIAHDCVVGDRTIFANNASLAGHAEVGDWAILGGFTGVHQFCKVGAHVMTGISSVVFKDIPPFVMASGQPAAPHGLNNEGLKRRGFSAEALSALKRAYKILYREGNTLAEAQAKLAPEAAKHAEVQQLLDFLARAERGIIR.

The protein belongs to the transferase hexapeptide repeat family. LpxA subfamily. As to quaternary structure, homotrimer.

It is found in the cytoplasm. The enzyme catalyses a (3R)-hydroxyacyl-[ACP] + UDP-N-acetyl-alpha-D-glucosamine = a UDP-3-O-[(3R)-3-hydroxyacyl]-N-acetyl-alpha-D-glucosamine + holo-[ACP]. It functions in the pathway glycolipid biosynthesis; lipid IV(A) biosynthesis; lipid IV(A) from (3R)-3-hydroxytetradecanoyl-[acyl-carrier-protein] and UDP-N-acetyl-alpha-D-glucosamine: step 1/6. Its function is as follows. Involved in the biosynthesis of lipid A, a phosphorylated glycolipid that anchors the lipopolysaccharide to the outer membrane of the cell. The sequence is that of Acyl-[acyl-carrier-protein]--UDP-N-acetylglucosamine O-acyltransferase from Thiobacillus denitrificans (strain ATCC 25259 / T1).